Consider the following 485-residue polypeptide: Glutamate--tRNA ligase (485 aa).

Positions 11-21 match the 'HIGH' region motif; that stretch reads PSPTGHLHIGG. The 'KMSKS' region motif lies at 252 to 256; it reads KMSKR. K255 is a binding site for ATP.

The protein belongs to the class-I aminoacyl-tRNA synthetase family. Glutamate--tRNA ligase type 1 subfamily. In terms of assembly, monomer.

It is found in the cytoplasm. The enzyme catalyses tRNA(Glu) + L-glutamate + ATP = L-glutamyl-tRNA(Glu) + AMP + diphosphate. Functionally, catalyzes the attachment of glutamate to tRNA(Glu) in a two-step reaction: glutamate is first activated by ATP to form Glu-AMP and then transferred to the acceptor end of tRNA(Glu). The polypeptide is Glutamate--tRNA ligase (Halalkalibacterium halodurans (strain ATCC BAA-125 / DSM 18197 / FERM 7344 / JCM 9153 / C-125) (Bacillus halodurans)).